We begin with the raw amino-acid sequence, 250 residues long: Membrane-spanning 4-domains subfamily A member 8 (250 aa).

Residues 1–74 are Cytoplasmic-facing; sequence MNSMTSAVPV…ALKEGKTLGA (74 aa). Residues 75 to 95 traverse the membrane as a helical segment; it reads IQIIIGLAHIGLGSIMATVLV. At 96-98 the chain is on the extracellular side; it reads GEY. Residues 99–119 form a helical membrane-spanning segment; sequence LSISFYGGFPFWGGLWFIISG. The Cytoplasmic portion of the chain corresponds to 120–136; the sequence is SLSVAAENQPYSYCLLS. A helical transmembrane segment spans residues 137–157; sequence GSLGLNIVSAICSAVGVILFI. The Extracellular segment spans residues 158–180; the sequence is TDLSIPHPYAYPDYYPYAWGVNP. Residues 181–201 traverse the membrane as a helical segment; sequence GMAISGVLLVFCLLEFGIACA. Over 202–250 the chain is Cytoplasmic; the sequence is SSHFGCQLVCCQSSNVSVIYPNIYAANPVITPEPVTSPPSYSSEIQANK.

Belongs to the MS4A family. Expressed by hematopoietic tissues and cells lines.

The protein localises to the membrane. In terms of biological role, may be involved in signal transduction as a component of a multimeric receptor complex. This chain is Membrane-spanning 4-domains subfamily A member 8 (MS4A8), found in Homo sapiens (Human).